A 409-amino-acid polypeptide reads, in one-letter code: Aspartic protease pepA (409 aa).

The first 19 residues, 1–19, serve as a signal peptide directing secretion; it reads MPSIVSLTAALTFVGAVIA. A propeptide spans 20–65 (activation peptide); sequence SPVEKRSAFSVEQVPHTTYLKNGPAQKVKTLRKYGKPVPQSLLDAA. A Peptidase A1 domain is found at 97–404; it reads YLSPVTVGST…PDSPPRIGLA (308 aa). Residues Asp-113 and Asp-293 contribute to the active site. Cys-329 and Cys-364 are joined by a disulfide. Asn-335 carries an N-linked (GlcNAc...) asparagine glycan.

This sequence belongs to the peptidase A1 family. Monomer.

It is found in the secreted. Functionally, secreted aspartic endopeptidase that allows assimilation of proteinaceous substrates. The scissile peptide bond is attacked by a nucleophilic water molecule activated by two aspartic residues in the active site. Shows a broad primary substrate specificity. Favors hydrophobic residues at the P1 and P1' positions. This is Aspartic protease pepA from Leptosphaeria maculans (strain JN3 / isolate v23.1.3 / race Av1-4-5-6-7-8) (Blackleg fungus).